We begin with the raw amino-acid sequence, 102 residues long: NADH-quinone oxidoreductase subunit K 2 (102 aa).

The next 3 membrane-spanning stretches (helical) occupy residues 6 to 26, 30 to 50, and 66 to 86; these read LEAF…GIIA, LVTV…ALVG, and FIIA…IAIF.

This sequence belongs to the complex I subunit 4L family. As to quaternary structure, NDH-1 is composed of 14 different subunits. Subunits NuoA, H, J, K, L, M, N constitute the membrane sector of the complex.

Its subcellular location is the cell inner membrane. It catalyses the reaction a quinone + NADH + 5 H(+)(in) = a quinol + NAD(+) + 4 H(+)(out). Functionally, NDH-1 shuttles electrons from NADH, via FMN and iron-sulfur (Fe-S) centers, to quinones in the respiratory chain. The immediate electron acceptor for the enzyme in this species is believed to be ubiquinone. Couples the redox reaction to proton translocation (for every two electrons transferred, four hydrogen ions are translocated across the cytoplasmic membrane), and thus conserves the redox energy in a proton gradient. This chain is NADH-quinone oxidoreductase subunit K 2, found in Aquifex aeolicus (strain VF5).